The sequence spans 1139 residues: Dual 3',5'-cyclic-AMP and -GMP phosphodiesterase beta (1139 aa).

Disordered stretches follow at residues 1-42 (MGKV…NINK) and 154-177 (GISE…STSN). Residues 1 to 429 (MGKVEDFEEH…LNLNNWISSR (429 aa)) lie on the Cytoplasmic side of the membrane. Over residues 9–22 (EHNKNSNQDIEKNV) the composition is skewed to basic and acidic residues. Positions 29-42 (NSNTINDQNENINK) are enriched in polar residues. A helical transmembrane segment spans residues 430-450 (MIIIGIVMLILSFIIWPLTTW). Topologically, residues 451–462 (SLKTSTWGRETY) are extracellular. The chain crosses the membrane as a helical span at residues 463–483 (IIILFHTLMAINTLILIFFII). At 484-498 (IGSTELCKYSECMSY) the chain is on the cytoplasmic side. Residues 499-519 (VLFSLMVALWGLWNIAIGLTL) traverse the membrane as a helical segment. Residues 520–536 (EYNPNLSEMPTTTYELE) are Extracellular-facing. Residue asparagine 524 is glycosylated (N-linked (GlcNAc...) asparagine). Residues 537–557 (MIYVLTYIYGFLPLVIIDIFF) traverse the membrane as a helical segment. Residues 558 to 564 (PSRTKYN) are Cytoplasmic-facing. Residues 565-585 (WIIHLIFIFLNSSSIILVGSA) traverse the membrane as a helical segment. The Extracellular portion of the chain corresponds to 586–592 (KPDFVPE). The helical transmembrane segment at 593-613 (IYVVFRILAYTTLCIFLYIGS) threads the bilayer. Topologically, residues 614–1139 (YTSELQIRYV…TLFFIKNVSD (526 aa)) are cytoplasmic. Residues 775-1098 (INISQLTKMI…IMWDTLMKEE (324 aa)) enclose the PDEase domain. Histidine 847 (proton donor) is an active-site residue. 847–851 (HNTIH) contacts a nucleoside 3',5'-cyclic phosphate. Residues histidine 851, histidine 887, aspartate 888, and aspartate 1000 each contribute to the a divalent metal cation site. 3 residues coordinate a nucleoside 3',5'-cyclic phosphate: aspartate 888, aspartate 1000, and glutamine 1052.

Belongs to the cyclic nucleotide phosphodiesterase family. A divalent metal cation is required as a cofactor.

It is found in the cell membrane. The protein resides in the endoplasmic reticulum membrane. It carries out the reaction 3',5'-cyclic GMP + H2O = GMP + H(+). The enzyme catalyses 3',5'-cyclic AMP + H2O = AMP + H(+). The protein operates within purine metabolism; 3',5'-cyclic GMP degradation; GMP from 3',5'-cyclic GMP: step 1/1. It functions in the pathway purine metabolism; 3',5'-cyclic AMP degradation; AMP from 3',5'-cyclic AMP: step 1/1. Its function is as follows. Plays a role in signal transduction by regulating the intracellular concentration of cyclic nucleotides cAMP and cGMP. Catalyzes the hydrolysis of both cAMP and cGMP to 5'-AMP and 5'-GMP, respectively. By regulating cAMP levels during the asexual blood stage and, thus PKA activation, required for merozoite invasion of erythrocytes and for the parasite development immediately following invasion. This chain is Dual 3',5'-cyclic-AMP and -GMP phosphodiesterase beta, found in Plasmodium falciparum (isolate 3D7).